Here is a 254-residue protein sequence, read N- to C-terminus: Alcohol dehydrogenase (254 aa).

Residue 10–33 participates in NAD(+) binding; that stretch reads FVAGLGGIGLDTSREIVKSGPKNL. Substrate is bound at residue Ser-138. Catalysis depends on Tyr-151, which acts as the Proton acceptor.

This sequence belongs to the short-chain dehydrogenases/reductases (SDR) family. As to quaternary structure, homodimer.

It catalyses the reaction a primary alcohol + NAD(+) = an aldehyde + NADH + H(+). It carries out the reaction a secondary alcohol + NAD(+) = a ketone + NADH + H(+). The chain is Alcohol dehydrogenase (Adh) from Drosophila mimica (Fruit fly).